Here is a 444-residue protein sequence, read N- to C-terminus: tRNA modification GTPase MnmE (444 aa).

(6S)-5-formyl-5,6,7,8-tetrahydrofolate is bound by residues Arg-23, Glu-82, and Lys-121. In terms of domain architecture, TrmE-type G spans 216–365 (GTSIVLAGLP…LKQALQKWLN (150 aa)). Asn-226 provides a ligand contact to K(+). Residues 226 to 231 (NAGKSS), 245 to 251 (TDIPGTT), and 270 to 273 (DSAG) each bind GTP. Ser-230 lines the Mg(2+) pocket. Residues Thr-245, Ile-247, and Thr-250 each coordinate K(+). Thr-251 is a Mg(2+) binding site. Lys-444 lines the (6S)-5-formyl-5,6,7,8-tetrahydrofolate pocket.

This sequence belongs to the TRAFAC class TrmE-Era-EngA-EngB-Septin-like GTPase superfamily. TrmE GTPase family. Homodimer. Heterotetramer of two MnmE and two MnmG subunits. Requires K(+) as cofactor.

The protein resides in the cytoplasm. Its function is as follows. Exhibits a very high intrinsic GTPase hydrolysis rate. Involved in the addition of a carboxymethylaminomethyl (cmnm) group at the wobble position (U34) of certain tRNAs, forming tRNA-cmnm(5)s(2)U34. The polypeptide is tRNA modification GTPase MnmE (Chlamydia trachomatis serovar A (strain ATCC VR-571B / DSM 19440 / HAR-13)).